Reading from the N-terminus, the 166-residue chain is Interferon gamma (166 aa).

Residues 1 to 23 form the signal peptide; the sequence is MKYTSYILAFQLCVVLGSLGCYC. Q24 carries the pyrrolidone carboxylic acid modification. N48, N86, and N120 each carry an N-linked (GlcNAc...) asparagine glycan.

It belongs to the type II (or gamma) interferon family. Homodimer. Interacts with IFNGR1 (via extracellular domain); this interaction promotes IFNGR1 dimerization. As to expression, released primarily from activated T lymphocytes.

Its subcellular location is the secreted. Type II interferon produced by immune cells such as T-cells and NK cells that plays crucial roles in antimicrobial, antiviral, and antitumor responses by activating effector immune cells and enhancing antigen presentation. Primarily signals through the JAK-STAT pathway after interaction with its receptor IFNGR1 to affect gene regulation. Upon IFNG binding, IFNGR1 intracellular domain opens out to allow association of downstream signaling components JAK2, JAK1 and STAT1, leading to STAT1 activation, nuclear translocation and transcription of IFNG-regulated genes. Many of the induced genes are transcription factors such as IRF1 that are able to further drive regulation of a next wave of transcription. Plays a role in class I antigen presentation pathway by inducing a replacement of catalytic proteasome subunits with immunoproteasome subunits. In turn, increases the quantity, quality, and repertoire of peptides for class I MHC loading. Increases the efficiency of peptide generation also by inducing the expression of activator PA28 that associates with the proteasome and alters its proteolytic cleavage preference. Up-regulates as well MHC II complexes on the cell surface by promoting expression of several key molecules such as cathepsins B/CTSB, H/CTSH, and L/CTSL. Participates in the regulation of hematopoietic stem cells during development and under homeostatic conditions by affecting their development, quiescence, and differentiation. The sequence is that of Interferon gamma (IFNG) from Callithrix jacchus (White-tufted-ear marmoset).